The sequence spans 142 residues: Large ribosomal subunit protein bL21 (142 aa).

The segment covering 74–84 (RRRQNSKRTRG) has biased composition (basic residues). The disordered stretch occupies residues 74 to 142 (RRRQNSKRTR…KAAAKAESAE (69 aa)). The span at 107–125 (KAAEKKAPKADAAEGEAAK) shows a compositional bias: basic and acidic residues. Over residues 126–135 (PKKAAPKKAA) the composition is skewed to basic residues.

Belongs to the bacterial ribosomal protein bL21 family. Part of the 50S ribosomal subunit. Contacts protein L20.

Functionally, this protein binds to 23S rRNA in the presence of protein L20. The polypeptide is Large ribosomal subunit protein bL21 (Brucella melitensis biotype 2 (strain ATCC 23457)).